Consider the following 949-residue polypeptide: Pyruvate, phosphate dikinase, chloroplastic (949 aa).

Residues 1 to 74 (MASAFKGILI…VMAPASDPTS (74 aa)) constitute a chloroplast transit peptide. A Phosphothreonine; by PDRP1 modification is found at Thr530. His532 (tele-phosphohistidine intermediate) is an active-site residue. Substrate is bound by residues Arg638, Arg695, Glu824, Gly845, Thr846, Asn847, and Asp848. Residue Glu824 participates in Mg(2+) binding. Residue Asp848 participates in Mg(2+) binding. Cys910 functions as the Proton donor in the catalytic mechanism.

It belongs to the PEP-utilizing enzyme family. Homodimer. Mg(2+) is required as a cofactor. In terms of processing, phosphorylation of Thr-530 in the dark inactivates the enzyme. Dephosphorylation upon light stimulation reactivates the enzyme.

It localises to the plastid. Its subcellular location is the chloroplast. The catalysed reaction is pyruvate + phosphate + ATP = phosphoenolpyruvate + AMP + diphosphate + H(+). With respect to regulation, activated by light-induced dephosphorylation. Inhibited by dark-induced phosphorylation. Both reactions are catalyzed by PDRP1. Functionally, formation of phosphoenolpyruvate, which is the primary acceptor of CO(2) in C4 and some Crassulacean acid metabolism plants. This Mesembryanthemum crystallinum (Common ice plant) protein is Pyruvate, phosphate dikinase, chloroplastic (PPD).